The chain runs to 259 residues: Global transcriptional regulator CodY (259 aa).

Residues 1–155 (MALLQKTRII…GATVVGMEIL (155 aa)) are GAF domain. Residues 203 to 222 (ASKIADRVGITRSVIVNALR) constitute a DNA-binding region (H-T-H motif). A Phosphoserine modification is found at Ser-215.

This sequence belongs to the CodY family.

The protein resides in the cytoplasm. Functionally, DNA-binding global transcriptional regulator which is involved in the adaptive response to starvation and acts by directly or indirectly controlling the expression of numerous genes in response to nutrient availability. During rapid exponential growth, CodY is highly active and represses genes whose products allow adaptation to nutrient depletion. This is Global transcriptional regulator CodY from Bacillus pumilus (strain SAFR-032).